The primary structure comprises 130 residues: Protein ApaG (130 aa).

Residues 3 to 127 (SAVTQDIQIT…FSLDSPFVRR (125 aa)) form the ApaG domain.

The chain is Protein ApaG from Methylocella silvestris (strain DSM 15510 / CIP 108128 / LMG 27833 / NCIMB 13906 / BL2).